We begin with the raw amino-acid sequence, 94 residues long: MSGRFAFNKGLKEVRFLFCQTGEHSAATRSFLLRNYPAMKKDNPATPILIRDASGTLPKVYARFEFGKEKSQSLEGLSDQQIEETVSSLVKNNS.

The protein belongs to the complex I NDUFA2 subunit family. Complex I is composed of about 40 different subunits.

It localises to the mitochondrion inner membrane. Its function is as follows. Accessory subunit of the mitochondrial membrane respiratory chain NADH dehydrogenase (Complex I), that is believed not to be involved in catalysis. Complex I functions in the transfer of electrons from NADH to the respiratory chain. The immediate electron acceptor for the enzyme is believed to be ubiquinone. This is NADH-ubiquinone oxidoreductase 10.5 kDa subunit (nuo-10.5) from Neurospora crassa (strain ATCC 24698 / 74-OR23-1A / CBS 708.71 / DSM 1257 / FGSC 987).